A 311-amino-acid polypeptide reads, in one-letter code: Olfactory receptor 5P3 (311 aa).

The Extracellular segment spans residues methionine 1 to alanine 25. Asparagine 5 carries N-linked (GlcNAc...) asparagine glycosylation. The helical transmembrane segment at isoleucine 26–isoleucine 46 threads the bilayer. The Cytoplasmic segment spans residues valine 47–histidine 54. A helical transmembrane segment spans residues leucine 55–serine 75. The Extracellular portion of the chain corresponds to serine 76 to alanine 99. A disulfide bridge links cysteine 97 with cysteine 189. The chain crosses the membrane as a helical span at residues glutamine 100–tyrosine 120. Residues aspartate 121 to glycine 139 lie on the Cytoplasmic side of the membrane. The chain crosses the membrane as a helical span at residues valine 140 to isoleucine 160. The Extracellular segment spans residues glycine 161–glutamate 196. Residues isoleucine 197–serine 217 traverse the membrane as a helical segment. Topologically, residues tyrosine 218 to alanine 237 are cytoplasmic. A helical membrane pass occupies residues phenylalanine 238–isoleucine 258. The Extracellular portion of the chain corresponds to tyrosine 259–asparagine 271. A helical membrane pass occupies residues lysine 272–leucine 292. The Cytoplasmic segment spans residues arginine 293–serine 311.

This sequence belongs to the G-protein coupled receptor 1 family. As to expression, expressed in the tongue.

The protein resides in the cell membrane. Odorant receptor (Potential). May be involved in taste perception. The protein is Olfactory receptor 5P3 (OR5P3) of Homo sapiens (Human).